A 243-amino-acid chain; its full sequence is NAD-dependent protein deacetylase (243 aa).

A Deacetylase sirtuin-type domain is found at 1–243; sequence MKHDLETLKH…VSVVKSLMTE (243 aa). NAD(+) contacts are provided by alanine 24, phenylalanine 35, arginine 36, glutamine 105, isoleucine 107, aspartate 108, and histidine 123. Phenylalanine 35 lines the nicotinamide pocket. Residues isoleucine 107 and aspartate 108 each contribute to the nicotinamide site. Histidine 123 serves as the catalytic Proton acceptor. Cysteine 131, cysteine 134, cysteine 151, and cysteine 154 together coordinate Zn(2+). Residues serine 192, serine 193, asparagine 215, and aspartate 232 each coordinate NAD(+).

The protein belongs to the sirtuin family. Class U subfamily. Requires Zn(2+) as cofactor.

The protein localises to the cytoplasm. The enzyme catalyses N(6)-acetyl-L-lysyl-[protein] + NAD(+) + H2O = 2''-O-acetyl-ADP-D-ribose + nicotinamide + L-lysyl-[protein]. Its function is as follows. NAD-dependent protein deacetylase which modulates the activities of several enzymes which are inactive in their acetylated form. In Staphylococcus aureus (strain NCTC 8325 / PS 47), this protein is NAD-dependent protein deacetylase.